A 68-amino-acid polypeptide reads, in one-letter code: Alpha/kappa-conotoxin-like pl14.2 (68 aa).

The N-terminal stretch at 1-27 (MPSVRSVTCCCLLWMMFSVQLVTPGSP) is a signal peptide. Positions 28 to 39 (ATAQLSGQRTAR) are excised as a propeptide. 2 disulfide bridges follow: Cys-46/Cys-61 and Cys-50/Cys-63. Arg-64 is subject to Arginine amide. The propeptide occupies 65–68 (GKRD).

It belongs to the conotoxin J superfamily. As to expression, expressed by the venom duct.

The protein localises to the secreted. Its function is as follows. Highly inhibits both nicotinic acetylcholine receptors (neuronal (alpha-3/beta-4) and muscular (alpha-1/beta-1/epsilon/delta) subtypes) and the voltage-gated potassium channel Kv1.6/KCNA6 subtype. In Conus planorbis (Planorbis cone), this protein is Alpha/kappa-conotoxin-like pl14.2.